The primary structure comprises 310 residues: Glutaminase (310 aa).

Residues Ser-67, Asn-118, Glu-161, Asn-168, Tyr-192, Tyr-244, and Val-262 each contribute to the substrate site.

The protein belongs to the glutaminase family. In terms of assembly, homotetramer.

It carries out the reaction L-glutamine + H2O = L-glutamate + NH4(+). This chain is Glutaminase, found in Legionella pneumophila (strain Paris).